The following is a 688-amino-acid chain: G protein-coupled receptor kinase 3 (688 aa).

Residues 1-190 form an N-terminal region; that stretch reads MADLEAVLAD…ELNIHLSMND (190 aa). The region spanning 54–175 is the RGS domain; sequence TFDKIFNQKI…MESEKFTRFC (122 aa). One can recognise a Protein kinase domain in the interval 191–453; that stretch reads FSVHRIIGRG…ARELKEHIFF (263 aa). Residues 197–205 and K220 contribute to the ATP site; that span reads IGRGGFGEV. Catalysis depends on D317, which acts as the Proton acceptor. The AGC-kinase C-terminal domain maps to 454–521; that stretch reads KGIDWQYVYL…MISERWQQEV (68 aa). Residues 558–652 enclose the PH domain; it reads DCIMHGYMLK…WLKELTCTFN (95 aa).

It belongs to the protein kinase superfamily. AGC Ser/Thr protein kinase family. GPRK subfamily. In terms of assembly, interacts with GIT1. Post-translationally, ubiquitinated. As to expression, expressed in brain cortex, hippocampus, striatum, hypothalamus, cerebellum and brainstem (at protein level).

Its subcellular location is the postsynapse. The protein resides in the presynapse. The enzyme catalyses [beta-adrenergic receptor] + ATP = [beta-adrenergic receptor]-phosphate + ADP + H(+). Functionally, specifically phosphorylates the agonist-occupied form of the beta-adrenergic and closely related receptors. This chain is G protein-coupled receptor kinase 3, found in Rattus norvegicus (Rat).